The chain runs to 248 residues: UPF0736 protein BC_1176 (248 aa).

It belongs to the UPF0736 family.

This chain is UPF0736 protein BC_1176, found in Bacillus cereus (strain ATCC 14579 / DSM 31 / CCUG 7414 / JCM 2152 / NBRC 15305 / NCIMB 9373 / NCTC 2599 / NRRL B-3711).